A 77-amino-acid polypeptide reads, in one-letter code: Large ribosomal subunit protein bL28 (77 aa).

Residues 1–20 (MSRVCQVTGKGPVTGNNISH) form a disordered region.

This sequence belongs to the bacterial ribosomal protein bL28 family.

This chain is Large ribosomal subunit protein bL28, found in Pseudomonas fluorescens (strain SBW25).